Reading from the N-terminus, the 142-residue chain is Probable inactive dual specificity protein phosphatase-like At4g18593 (142 aa).

It belongs to the protein-tyrosine phosphatase family. Non-receptor class dual specificity subfamily.

The sequence is that of Probable inactive dual specificity protein phosphatase-like At4g18593 from Arabidopsis thaliana (Mouse-ear cress).